Reading from the N-terminus, the 217-residue chain is Large ribosomal subunit protein uL3 (217 aa).

The protein belongs to the universal ribosomal protein uL3 family. As to quaternary structure, part of the 50S ribosomal subunit. Forms a cluster with proteins L14 and L19.

In terms of biological role, one of the primary rRNA binding proteins, it binds directly near the 3'-end of the 23S rRNA, where it nucleates assembly of the 50S subunit. This chain is Large ribosomal subunit protein uL3, found in Mycobacterium marinum (strain ATCC BAA-535 / M).